Reading from the N-terminus, the 115-residue chain is DNA-binding protein Ta0052 (115 aa).

Residues methionine 1–arginine 41 form a disordered region. Residues leucine 15–glutamate 25 are compositionally biased toward low complexity. The span at glutamine 26 to arginine 41 shows a compositional bias: basic and acidic residues.

Belongs to the PDCD5 family.

The polypeptide is DNA-binding protein Ta0052 (Thermoplasma acidophilum (strain ATCC 25905 / DSM 1728 / JCM 9062 / NBRC 15155 / AMRC-C165)).